The sequence spans 291 residues: Beta-lactamase OXY-1 (291 aa).

The signal sequence occupies residues 1 to 24; sequence MLKSSWRKTALMAAAAVPLLLASG. The active-site Acyl-ester intermediate is serine 73. 237–239 lines the substrate pocket; the sequence is KTG.

This sequence belongs to the class-A beta-lactamase family.

The catalysed reaction is a beta-lactam + H2O = a substituted beta-amino acid. In terms of biological role, hydrolyzes broad-spectrum beta-lactam antibiotics. Active against cephalosporins. The sequence is that of Beta-lactamase OXY-1 (bla) from Klebsiella oxytoca.